The chain runs to 354 residues: Neutral protease 2 homolog AN7962 (354 aa).

The signal sequence occupies residues 1-19 (MKFIAPIALLGMFQAASAS). A propeptide spanning residues 20–178 (PVDIKTSNAG…GAQLSKLSKR (159 aa)) is cleaved from the precursor. Disulfide bonds link cysteine 184–cysteine 255 and cysteine 262–cysteine 280. Residue histidine 305 coordinates Zn(2+). Glutamate 306 is a catalytic residue. Zn(2+) contacts are provided by histidine 309 and aspartate 320.

The protein belongs to the peptidase M35 family. It depends on Zn(2+) as a cofactor.

Its subcellular location is the secreted. It catalyses the reaction Preferential cleavage of bonds with hydrophobic residues in P1'. Also 3-Asn-|-Gln-4 and 8-Gly-|-Ser-9 bonds in insulin B chain.. Secreted metalloproteinase that allows assimilation of proteinaceous substrates. Shows high activities on basic nuclear substrates such as histone and protamine. The protein is Neutral protease 2 homolog AN7962 of Emericella nidulans (strain FGSC A4 / ATCC 38163 / CBS 112.46 / NRRL 194 / M139) (Aspergillus nidulans).